Consider the following 98-residue polypeptide: U11-barytoxin-Tl1b (98 aa).

The first 21 residues, 1–21, serve as a signal peptide directing secretion; that stretch reads MKTLVLVAVLGLASLYLLSYA. Residues 22 to 50 constitute a propeptide that is removed on maturation; the sequence is SEVQQLSRDEEEFRALVASFGGLFDTEER. Disulfide bonds link C57–C71, C64–C76, and C70–C89.

Belongs to the neurotoxin 10 (Hwtx-1) family. 25 (ICK4) subfamily. In terms of tissue distribution, expressed by the venom gland.

The protein resides in the secreted. Functionally, ion channel inhibitor. In Trittame loki (Brush-footed trapdoor spider), this protein is U11-barytoxin-Tl1b.